The primary structure comprises 141 residues: VLSSADKANIKATWDKIGGHGGEYGAEALERTFLCFPTTKTYFPHFDLSHGSAQVKAHGKKVADALAVAAAHLDDLPAALSALSDLHAYKLRVDPVNFKLLSHCLLVTLAAHHPAEFTPAVHASLDKFLSSVSTVLTSKYR.

One can recognise a Globin domain in the interval 1–141 (VLSSADKANI…VSTVLTSKYR (141 aa)). Residue Ser3 is modified to Phosphoserine. 2 positions are modified to N6-succinyllysine: Lys7 and Lys11. Lys16 is modified (N6-acetyllysine; alternate). Lys16 bears the N6-succinyllysine; alternate mark. Position 24 is a phosphotyrosine (Tyr24). Lys40 carries the N6-succinyllysine modification. Phosphoserine is present on Ser49. Residue His58 participates in O2 binding. A heme b-binding site is contributed by His87. Position 102 is a phosphoserine (Ser102). Thr108 is modified (phosphothreonine). Ser124 and Ser131 each carry phosphoserine. Residues Thr134 and Thr137 each carry the phosphothreonine modification. The residue at position 138 (Ser138) is a Phosphoserine.

This sequence belongs to the globin family. Heterotetramer of two alpha chains and two beta chains. Red blood cells.

Involved in oxygen transport from the lung to the various peripheral tissues. Its function is as follows. Hemopressin acts as an antagonist peptide of the cannabinoid receptor CNR1. Hemopressin-binding efficiently blocks cannabinoid receptor CNR1 and subsequent signaling. This is Hemoglobin subunit alpha (HBA) from Proteles cristata (Aardwolf).